The sequence spans 147 residues: Histone H2B (147 aa).

Over residues Met1–Pro31 the composition is skewed to basic and acidic residues. The interval Met1–Lys55 is disordered. 3 positions are modified to N6-acetyllysine: Lys7, Lys35, and Lys36. Lys143 participates in a covalent cross-link: Glycyl lysine isopeptide (Lys-Gly) (interchain with G-Cter in ubiquitin).

The protein belongs to the histone H2B family. In terms of assembly, the nucleosome is a histone octamer containing two molecules each of H2A, H2B, H3 and H4 assembled in one H3-H4 heterotetramer and two H2A-H2B heterodimers. The octamer wraps approximately 147 bp of DNA. Can be acetylated to form H2BK6ac, H2BK33ac and H2BK34ac. In terms of processing, monoubiquitinated to form H2BK143ub1; may give a specific tag for epigenetic transcriptional activation.

The protein localises to the nucleus. The protein resides in the chromosome. Core component of nucleosome. Nucleosomes wrap and compact DNA into chromatin, limiting DNA accessibility to the cellular machineries which require DNA as a template. Histones thereby play a central role in transcription regulation, DNA repair, DNA replication and chromosomal stability. DNA accessibility is regulated via a complex set of post-translational modifications of histones, also called histone code, and nucleosome remodeling. The sequence is that of Histone H2B (HIS2B) from Gossypium hirsutum (Upland cotton).